A 557-amino-acid polypeptide reads, in one-letter code: Myo-inositol transporter 2 (557 aa).

Residues 1-76 (MDFNNIPLAT…ENGEGFEAEK (76 aa)) are Cytoplasmic-facing. The tract at residues 24 to 69 (EMTTRPSETKKKVPFSEDMREIPSLPNEEEANATDPQANEVADENG) is disordered. Positions 30-44 (SETKKKVPFSEDMRE) are enriched in basic and acidic residues. A helical membrane pass occupies residues 77 to 97 (ISSWIWVLSAVAGISGLLFGY). Residues 98–99 (DT) are Extracellular-facing. A helical membrane pass occupies residues 100 to 120 (GVISGALAVLGSDLGHVLSSG). Over 121 to 123 (QKE) the chain is Cytoplasmic. Residues 124 to 144 (LITSATSFAALISATTSGWLA) form a helical membrane-spanning segment. Topologically, residues 145-157 (DWVGRKRLLLCAD) are extracellular. The chain crosses the membrane as a helical span at residues 158-178 (AIFVIGSVIMAASRNVAMMVV). At 179 to 180 (GR) the chain is on the cytoplasmic side. The chain crosses the membrane as a helical span at residues 181–201 (FIVGYGIGLTSLIVPMYITEL). Topologically, residues 202–209 (APARLRGR) are extracellular. A helical transmembrane segment spans residues 210-230 (LVIIYVVFITGGQLIAYSLNA). The Cytoplasmic portion of the chain corresponds to 231–240 (AFEHVHQGWR). The chain crosses the membrane as a helical span at residues 241–261 (IMFGIGAAPALGQLISLFWTP). Residues 262 to 367 (ESPRYLLRHN…IFQSVGFKNS (106 aa)) lie on the Extracellular side of the membrane. Residues 368–388 (ISVSIVVGATNFVFTIVAFMF) form a helical membrane-spanning segment. The Cytoplasmic portion of the chain corresponds to 389-396 (IDRIGRRR). A helical membrane pass occupies residues 397 to 417 (ILLCTSAVMIAGLALCAIAYH). Residues 418-432 (FLPADTTQNTNSGWQ) lie on the Extracellular side of the membrane. Residues 433–453 (YVVLASIIIFLASYASGIGNI) traverse the membrane as a helical segment. The Cytoplasmic portion of the chain corresponds to 454 to 468 (PWQQAELFPMEVRAL). A helical transmembrane segment spans residues 469–489 (GAGFSTAINWVGNLIISASFL). Over 490-498 (TMMESITPT) the chain is Extracellular. Residues 499-519 (GTFALFAGFCFVGLVTSYFTY) traverse the membrane as a helical segment. The Cytoplasmic portion of the chain corresponds to 520-557 (PELAGMSIENIHKLLEKGFWQAVKESTKRVRKGRIDEA).

The protein belongs to the major facilitator superfamily. Sugar transporter (TC 2.A.1.1) family.

It localises to the membrane. The catalysed reaction is myo-inositol(out) + H(+)(out) = myo-inositol(in) + H(+)(in). In terms of biological role, transporter for myo-inositol. The chain is Myo-inositol transporter 2 (itr2) from Schizosaccharomyces pombe (strain 972 / ATCC 24843) (Fission yeast).